Reading from the N-terminus, the 569-residue chain is F-box-like/WD repeat-containing protein TBL1X (569 aa).

Residues 55 to 87 form the LisH domain; the sequence is TSDEVNFLVYRYLQESGFSHSAFTFGIESHISQ. An F-box-like domain is found at 92 to 137; that stretch reads GTLVPPAALISILQKGLQYVEAEISINEDGTVFDGRPIESLSLIDA. K153 is modified (N6-acetyllysine). Residues 170–195 are disordered; sequence TSASVSQQNPSKNREATVNGEENRAH. The residue at position 175 (S175) is a Phosphoserine. 8 WD repeats span residues 222 to 261, 278 to 317, 319 to 358, 361 to 401, 402 to 441, 444 to 492, 495 to 534, and 536 to 568; these read GHES…NGGS, PSNK…ASTL, QHKG…AKQQ, FHSA…KTFQ, GHTN…CIHD, AHNK…CTHT, KHQE…LVHS, and RGTG…LDLR. K332 participates in a covalent cross-link: Glycyl lysine isopeptide (Lys-Gly) (interchain with G-Cter in SUMO2).

It belongs to the WD repeat EBI family. Homotetramer; dimer of dimers. Component of the N-Cor repressor complex, at least composed of NCOR1, NCOR2, HDAC3, TBL1X, TBL1R, CORO2A and GPS2. Interacts with GPS2 (when sumoylated); leading to protect GPS2 against degradation by the proteasome. Component of a E3 ubiquitin ligase complex containing UBE2D1, SIAH1, CACYBP/SIP, SKP1, APC and TBL1X. Probably part of other corepressor complexes, that do not contain NCOR1 and NCOR2. Interacts with histones H2B, H3a and H4. Interacts with MECP2; recruits TBL1X to the heterochromatin foci. Interacts with USP44.

It is found in the nucleus. In terms of biological role, F-box-like protein involved in the recruitment of the ubiquitin/19S proteasome complex to nuclear receptor-regulated transcription units. Plays an essential role in transcription activation mediated by nuclear receptors. Probably acts as integral component of corepressor complexes that mediates the recruitment of the 19S proteasome complex, leading to the subsequent proteasomal degradation of transcription repressor complexes, thereby allowing cofactor exchange. The protein is F-box-like/WD repeat-containing protein TBL1X (TBL1X) of Macaca fascicularis (Crab-eating macaque).